A 290-amino-acid chain; its full sequence is RWD domain-containing protein 2B (290 aa).

An RWD domain is found at 12 to 136 (SELDLLASMF…EWVKEHAFDY (125 aa)).

The chain is RWD domain-containing protein 2B (Rwdd2b) from Mus musculus (Mouse).